The chain runs to 46 residues: Iota-conotoxin-like R11.7 (46 aa).

4-hydroxyproline occurs at positions 2 and 11. Intrachain disulfides connect Cys-5-Cys-19, Cys-12-Cys-22, Cys-18-Cys-27, and Cys-21-Cys-38. 4-hydroxyproline is present on Pro-29. Phe-44 carries the post-translational modification D-phenylalanine.

Belongs to the conotoxin I1 superfamily. As to expression, expressed by the venom duct.

Its subcellular location is the secreted. Its function is as follows. Iota-conotoxins bind to voltage-gated sodium channels (Nav) and act as agonists by shifting the voltage-dependence of activation to more hyperpolarized levels. Produces general excitatory symptoms. This is Iota-conotoxin-like R11.7 from Conus radiatus (Rayed cone).